The sequence spans 57 residues: Plasma membrane proteolipid 3 (57 aa).

A helical transmembrane segment spans residues isoleucine 34 to isoleucine 54.

It belongs to the UPF0057 (PMP3) family.

The protein resides in the cell membrane. Plays a role in the regulation of membrane potential. Could mediate a proton leak. This chain is Plasma membrane proteolipid 3 (pmp-1), found in Neurospora crassa (strain ATCC 24698 / 74-OR23-1A / CBS 708.71 / DSM 1257 / FGSC 987).